A 416-amino-acid polypeptide reads, in one-letter code: Calreticulin (416 aa).

Residues 1-17 (MLLSVPLLLGLLGLAAA) form the signal peptide. The N-domain stretch occupies residues 18–197 (DPAIYFKEQF…NSQVESGSLE (180 aa)). Glutamine 26 is a binding site for Ca(2+). At lysine 48 the chain carries N6-acetyllysine. The Ca(2+) site is built by lysine 62 and lysine 64. Residue lysine 64 is modified to N6-(2-hydroxyisobutyryl)lysine. Residues cysteine 105 and cysteine 137 are joined by a disulfide bond. Residues tyrosine 109, lysine 111, tyrosine 128, and aspartate 135 each contribute to the an alpha-D-glucoside site. Lysine 159 carries the post-translational modification N6-acetyllysine. The 1-1 repeat unit spans residues 191–202 (VESGSLEDDWDF). Residues 191-255 (VESGSLEDDW…DAKKPEDWDE (65 aa)) are 4 X approximate repeats. A disordered region spans residues 193–277 (SGSLEDDWDF…NPEYKGEWKP (85 aa)). The tract at residues 198–308 (DDWDFLPPKK…YSPDANIYAY (111 aa)) is P-domain. Over residues 207-251 (KIKDPDAAKPEDWDERAKIDDPTDSKPEDWDKPEHIPDPDAKKPE) the composition is skewed to basic and acidic residues. Position 209 is an N6-acetyllysine (lysine 209). Tandem repeats lie at residues 210–221 (DPDAAKPEDWDE), 227–238 (DPTDSKPEDWDK), 244–255 (DPDAKKPEDWDE), 259–269 (GEWEPPVIQNP), 273–283 (GEWKPRQIDNP), and 287–297 (GTWIHPEIDNP). The tract at residues 237-270 (DKPEHIPDPDAKKPEDWDEEMDGEWEPPVIQNPE) is interaction with PPIB. Residues 252-261 (DWDEEMDGEW) show a composition bias toward acidic residues. Residues 259–297 (GEWEPPVIQNPEYKGEWKPRQIDNPDYKGTWIHPEIDNP) form a 3 X approximate repeats region. The C-domain stretch occupies residues 309 to 416 (DSFAVLGLDL…DATGQAKDEL (108 aa)). Position 317 (aspartate 317) interacts with an alpha-D-glucoside. Aspartate 328 serves as a coordination point for Ca(2+). A disordered region spans residues 350–416 (TKAAEKQMKD…DATGQAKDEL (67 aa)). Positions 352–379 (AAEKQMKDKQDEEQRLKEEEEDKKRKEE) are enriched in basic and acidic residues. Acidic residues predominate over residues 380–408 (EEAEDKEDEDDRDEDEDEEDEKEEDEEDA). The Prevents secretion from ER motif lies at 413–416 (KDEL).

The protein belongs to the calreticulin family. In terms of assembly, monomer. Component of an EIF2 complex at least composed of CELF1/CUGBP1, CALR, CALR3, EIF2S1, EIF2S2, HSP90B1 and HSPA5. Interacts with GABARAP, NR3C1 and TRIM21. Interacts with PPIB and SPACA9. Interacts (via P-domain) with PDIA5. Interacts with PDIA3/ERp57. Interacts with CLCC1. In terms of tissue distribution, predentin and odontoblast.

The protein localises to the endoplasmic reticulum lumen. Its subcellular location is the cytoplasm. The protein resides in the cytosol. It is found in the secreted. It localises to the extracellular space. The protein localises to the extracellular matrix. Its subcellular location is the cell surface. The protein resides in the sarcoplasmic reticulum lumen. It is found in the cytoplasmic vesicle. It localises to the secretory vesicle. The protein localises to the cortical granule. Its subcellular location is the cytolytic granule. Its function is as follows. Calcium-binding chaperone that promotes folding, oligomeric assembly and quality control in the endoplasmic reticulum (ER) via the calreticulin/calnexin cycle. This lectin interacts transiently with almost all of the monoglucosylated glycoproteins that are synthesized in the ER. Interacts with the DNA-binding domain of NR3C1 and mediates its nuclear export. Involved in maternal gene expression regulation. May participate in oocyte maturation via the regulation of calcium homeostasis. Present in the cortical granules of non-activated oocytes, is exocytosed during the cortical reaction in response to oocyte activation and might participate in the block to polyspermy. This chain is Calreticulin (Calr), found in Rattus norvegicus (Rat).